The sequence spans 80 residues: MNKNPIYRSEEEAKNIACGNVAAELDENSQALDAINGAGWKQTIVCTIAQGTVGCLVSYGLGNGGYCCTYTVECSKTCNK.

The propeptide at 1 to 38 (MNKNPIYRSEEEAKNIACGNVAAELDENSQALDAINGA) is cleaved by FlvT. A 2,3-didehydrobutyrine; by FlvM1 mark is found at Thr43 and Thr47. The segment at residues 52 to 55 (TVGC) is a cross-link (beta-methyllanthionine (Thr-Cys); by FlvM1). Residues 58 to 68 (SYGLGNGGYCC) constitute a cross-link (lanthionine (Ser-Cys); by FlvM1). 2 consecutive cross-links (beta-methyllanthionine (Thr-Cys); by FlvM1) follow at residues 69 to 74 (TYTVEC) and 71 to 78 (TVECSKTC).

Post-translationally, the lanthionine formed by Ser-58 and Cys-68 forms a putative lipid II binding motif. Maturation of FlvA1 peptides involves the enzymatic conversion of Thr, and Ser into dehydrated AA and the formation of thioether bonds with cysteines. Modifications are processed by the flavecin synthetase FlvM1. This is followed by membrane translocation and cleavage of the modified precursor. In terms of processing, contains DL-lanthionine and DL-beta-methyllanthionine, when coepressed in E.coli with the flavecin synthetase FlvM1.

The protein localises to the secreted. In terms of biological role, lanthionine-containing peptide antibiotic (lantibiotic) only active on Gram-positive bacteria in synergy with Flvbeta peptides, which are encoded by the same operon than Flvalpha.a. Shows antibacterial activity in synergy with Flvbeta.b, Flvbeta.c, Flvbeta.e and Flvbeta.g. Does not show antibacterial activity when tested with Flvbeta.a, Flvbeta.d, Flvbeta.f and Flvbeta.h. The bactericidal activity of lantibiotics is based on depolarization of energized bacterial cytoplasmic membranes, initiated by the formation of aqueous transmembrane pores. The sequence is that of Lantibiotic Flvalpha.b from Ruminococcus flavefaciens.